The sequence spans 173 residues: Large ribosomal subunit protein uL10 (173 aa).

Belongs to the universal ribosomal protein uL10 family. In terms of assembly, part of the ribosomal stalk of the 50S ribosomal subunit. The N-terminus interacts with L11 and the large rRNA to form the base of the stalk. The C-terminus forms an elongated spine to which L12 dimers bind in a sequential fashion forming a multimeric L10(L12)X complex.

Functionally, forms part of the ribosomal stalk, playing a central role in the interaction of the ribosome with GTP-bound translation factors. The protein is Large ribosomal subunit protein uL10 of Nitratidesulfovibrio vulgaris (strain ATCC 29579 / DSM 644 / CCUG 34227 / NCIMB 8303 / VKM B-1760 / Hildenborough) (Desulfovibrio vulgaris).